The chain runs to 145 residues: Immunoglobulin iota chain (145 aa).

An N-terminal signal peptide occupies residues 1-19; that stretch reads MSWAPVLLMLFVYCTGCGP. Residues 20–41 form a framework-1 region; that stretch reads QPVLHQPPAMSSALGTTIRLTC. The Ig-like V-type domain maps to 20-132; the sequence is QPVLHQPPAM…EKEEREREWE (113 aa). An intrachain disulfide couples C41 to C115. The segment at 42–56 is complementarity-determining-1; that stretch reads TLRNDHDIGVYSVYW. The framework-2 stretch occupies residues 57 to 70; sequence YQQRPGHPPRFLLR. The segment at 71–81 is complementarity-determining-2; sequence YFSQSDKSQGP. Positions 82-115 are framework-3; that stretch reads QVPPRFSGSKDVARNRGYLSISELQPEDEAMYYC. Residues 121–130 are compositionally biased toward basic and acidic residues; that stretch reads SSEKEERERE. The tract at residues 121–145 is disordered; sequence SSEKEEREREWEEEMEPTAARTRVP.

This sequence belongs to the immunoglobulin superfamily. In terms of assembly, interacts with IGLL1. Interacts with SYNV1/HRD1 (via N-terminus); this interaction leads to increased VPREB1 ubiquitination and degradation in pre-B cells, possibly through a lysosomal, not proteasomal, pathway. As to expression, only expressed by pre-B-cells.

Its subcellular location is the endoplasmic reticulum. In terms of biological role, associates with the Ig-mu chain to form a molecular complex that is expressed on the surface of pre-B-cells. This complex presumably regulates Ig gene rearrangements in the early steps of B-cell differentiation. This is Immunoglobulin iota chain (VPREB1) from Homo sapiens (Human).